The following is a 198-amino-acid chain: Recombination protein RecR (198 aa).

Residues Cys57–Cys72 form a C4-type zinc finger. Residues Asn80–Pro175 form the Toprim domain.

It belongs to the RecR family.

May play a role in DNA repair. It seems to be involved in an RecBC-independent recombinational process of DNA repair. It may act with RecF and RecO. This chain is Recombination protein RecR, found in Endomicrobium trichonymphae.